The sequence spans 329 residues: Beta-ketoacyl-[acyl-carrier-protein] synthase III (329 aa).

Active-site residues include cysteine 123 and histidine 256. Positions glutamine 257 to arginine 261 are ACP-binding. Asparagine 286 is an active-site residue.

Belongs to the thiolase-like superfamily. FabH family. Homodimer.

The protein resides in the cytoplasm. It carries out the reaction malonyl-[ACP] + acetyl-CoA + H(+) = 3-oxobutanoyl-[ACP] + CO2 + CoA. Its pathway is lipid metabolism; fatty acid biosynthesis. Functionally, catalyzes the condensation reaction of fatty acid synthesis by the addition to an acyl acceptor of two carbons from malonyl-ACP. Catalyzes the first condensation reaction which initiates fatty acid synthesis and may therefore play a role in governing the total rate of fatty acid production. Possesses both acetoacetyl-ACP synthase and acetyl transacylase activities. Its substrate specificity determines the biosynthesis of branched-chain and/or straight-chain of fatty acids. The chain is Beta-ketoacyl-[acyl-carrier-protein] synthase III from Bordetella parapertussis (strain 12822 / ATCC BAA-587 / NCTC 13253).